A 529-amino-acid polypeptide reads, in one-letter code: MRRNSSLSFQMERPLEEQVQSKWSSSQGRTGTGGSDVLQMQNSEHHGQSIKTQTDSISLEDVAVNFTLEEWALLDPGQRNIYRDVMRATFKNLACIGEKWKDQDIEDEHKNQGRNLRSPMVEALCENKEDCPCGKSTSQIPDLNTNLETPTGLKPCDCSVCGEVFMHQVSLNRHMRSHTEQKPNECHEYGEKPHKCKECGKTFTRSSSIRTHERIHTGEKPYECKECGKAFAFLFSFRNHIRIHTGETPYECKECGKAFRYLTALRRHEKNHTGEKPYKCKQCGKAFIYYQPFLTHERTHTGEKPYECKQCGKAFSCPTYLRSHEKTHTGEKPFVCRECGRAFFSHSSLRKHVKTHTGVQPYTCKKCGEAFKSSSSCEVHERTHFGEKPYECKQCGKAFNSSSYLQLHERVHTGEKTYECKECGKAFLYSTHFRIHERTHTREKPYECKQCGRVFIYFSHLRRHERSHTGVKPCECKQCGKAFTCLNSLKVHKRIHTGERPFQCRQCGKAFSYSKSLHVHERTHSRQKP.

A disordered region spans residues 1–53 (MRRNSSLSFQMERPLEEQVQSKWSSSQGRTGTGGSDVLQMQNSEHHGQSIKTQ). Residues 57-132 (ISLEDVAVNF…ALCENKEDCP (76 aa)) form the KRAB domain. 13 C2H2-type zinc fingers span residues 156-178 (CDCS…MRSH), 194-216 (HKCK…ERIH), 222-244 (YECK…IRIH), 250-272 (YECK…EKNH), 278-300 (YKCK…ERTH), 306-328 (YECK…EKTH), 334-356 (FVCR…VKTH), 362-384 (YTCK…ERTH), 390-412 (YECK…ERVH), 418-440 (YECK…ERTH), 446-468 (YECK…ERSH), 474-496 (CECK…KRIH), and 502-524 (FQCR…ERTH).

Belongs to the krueppel C2H2-type zinc-finger protein family.

The protein resides in the nucleus. Its function is as follows. May be involved in transcriptional regulation. The chain is Zinc finger protein 490 (ZNF490) from Homo sapiens (Human).